A 320-amino-acid chain; its full sequence is Mitochondrial thiamine pyrophosphate carrier (320 aa).

3 Solcar repeats span residues 13–106 (NTKF…LTEL), 116–202 (REFS…LKHL), and 214–309 (NENL…FCNV). The chain crosses the membrane as a helical span at residues 19 to 39 (AVAGSVSGLVTRALISPFDVI). At S51 the chain carries Phosphoserine. The next 4 helical transmembrane spans lie at 87-107 (ILSI…TELV), 122-142 (FVCG…VDVL), 173-193 (VFYK…GLQF), and 220-240 (LLCG…LDLF). A Substrate recognition motif is present at residues 241 to 246 (KKRLQV). A helical transmembrane segment spans residues 293 to 313 (ALSTGFMFFSYEFFCNVFHCM).

It belongs to the mitochondrial carrier (TC 2.A.29) family. As to expression, expressed in all tissues examined except for placenta. Highest levels in colon, kidney, lung, testis, spleen, and brain.

It is found in the mitochondrion membrane. The enzyme catalyses thiamine phosphate(out) + thiamine diphosphate(in) = thiamine phosphate(in) + thiamine diphosphate(out). Its function is as follows. Mitochondrial transporter mediating uptake of thiamine diphosphate into mitochondria. It is not clear if the antiporter activity is affected by the membrane potential or by the proton electrochemical gradient. The sequence is that of Mitochondrial thiamine pyrophosphate carrier from Homo sapiens (Human).